A 206-amino-acid chain; its full sequence is LexA repressor (206 aa).

Positions 28–48 (RAEIAKRLGFKSANAAEEHLK) form a DNA-binding region, H-T-H motif. Catalysis depends on for autocatalytic cleavage activity residues Ser123 and Lys160.

The protein belongs to the peptidase S24 family. Homodimer.

It catalyses the reaction Hydrolysis of Ala-|-Gly bond in repressor LexA.. In terms of biological role, represses a number of genes involved in the response to DNA damage (SOS response), including recA and lexA. In the presence of single-stranded DNA, RecA interacts with LexA causing an autocatalytic cleavage which disrupts the DNA-binding part of LexA, leading to derepression of the SOS regulon and eventually DNA repair. In Shewanella sediminis (strain HAW-EB3), this protein is LexA repressor.